The primary structure comprises 71 residues: DNA gyrase inhibitor YacG (71 aa).

Residues cysteine 9, cysteine 12, cysteine 28, and cysteine 32 each coordinate Zn(2+). The interval 43 to 71 (EEKRIPSQSESNDSDEWSEMPEQDPKPFN) is disordered. Residues 54–64 (NDSDEWSEMPE) show a composition bias toward acidic residues.

It belongs to the DNA gyrase inhibitor YacG family. In terms of assembly, interacts with GyrB. It depends on Zn(2+) as a cofactor.

Its function is as follows. Inhibits all the catalytic activities of DNA gyrase by preventing its interaction with DNA. Acts by binding directly to the C-terminal domain of GyrB, which probably disrupts DNA binding by the gyrase. This chain is DNA gyrase inhibitor YacG, found in Proteus mirabilis (strain HI4320).